The following is a 668-amino-acid chain: Fructose-1,6-bisphosphatase class 3 (668 aa).

This sequence belongs to the FBPase class 3 family. Requires Mn(2+) as cofactor.

It catalyses the reaction beta-D-fructose 1,6-bisphosphate + H2O = beta-D-fructose 6-phosphate + phosphate. It participates in carbohydrate biosynthesis; gluconeogenesis. This is Fructose-1,6-bisphosphatase class 3 from Clostridium botulinum (strain Okra / Type B1).